Reading from the N-terminus, the 307-residue chain is Ribosomal RNA small subunit methyltransferase H (307 aa).

Residues 34-36 (GGH), D53, L88, D102, and Q109 each bind S-adenosyl-L-methionine.

The protein belongs to the methyltransferase superfamily. RsmH family.

It localises to the cytoplasm. It catalyses the reaction cytidine(1402) in 16S rRNA + S-adenosyl-L-methionine = N(4)-methylcytidine(1402) in 16S rRNA + S-adenosyl-L-homocysteine + H(+). In terms of biological role, specifically methylates the N4 position of cytidine in position 1402 (C1402) of 16S rRNA. This chain is Ribosomal RNA small subunit methyltransferase H, found in Sulfurimonas denitrificans (strain ATCC 33889 / DSM 1251) (Thiomicrospira denitrificans (strain ATCC 33889 / DSM 1251)).